A 344-amino-acid chain; its full sequence is Phenylalanine--tRNA ligase alpha subunit (344 aa).

E256 provides a ligand contact to Mg(2+).

The protein belongs to the class-II aminoacyl-tRNA synthetase family. Phe-tRNA synthetase alpha subunit type 1 subfamily. Tetramer of two alpha and two beta subunits. Mg(2+) is required as a cofactor.

The protein localises to the cytoplasm. It catalyses the reaction tRNA(Phe) + L-phenylalanine + ATP = L-phenylalanyl-tRNA(Phe) + AMP + diphosphate + H(+). In Bacillus cytotoxicus (strain DSM 22905 / CIP 110041 / 391-98 / NVH 391-98), this protein is Phenylalanine--tRNA ligase alpha subunit.